We begin with the raw amino-acid sequence, 131 residues long: MNIIQQLEAEQAARLSETKTIPEFQPGDTVIVNVKVVEGERTRVQAYEGVCIARNGGGLNENFVVRKISYGEGVERVFPIYSPLIDSIKVVRRGKVRRAKLYYLRDRRGKSARIAERTDDRAKKAKATAAE.

Residues 110-131 (KSARIAERTDDRAKKAKATAAE) form a disordered region. Positions 113–122 (RIAERTDDRA) are enriched in basic and acidic residues.

It belongs to the bacterial ribosomal protein bL19 family.

Its function is as follows. This protein is located at the 30S-50S ribosomal subunit interface and may play a role in the structure and function of the aminoacyl-tRNA binding site. The sequence is that of Large ribosomal subunit protein bL19 from Azorhizobium caulinodans (strain ATCC 43989 / DSM 5975 / JCM 20966 / LMG 6465 / NBRC 14845 / NCIMB 13405 / ORS 571).